The sequence spans 328 residues: Probable cell division protein WhiA (328 aa).

The segment at residues 273 to 306 is a DNA-binding region (H-T-H motif); that stretch reads SLEELGALADPPLTKDAVAGRIRRLLAMADKRAS.

It belongs to the WhiA family. Monomer in solution.

Functionally, involved in cell division and chromosome segregation. Involved in sporulation. May coordinate the cessation of aerial hyphae growth and subsequent chromosome segregation and/or septation. Required for expression of the ParB partioning protein during sporogenesis. Activates its own transcription and represses WhiB. Binds with low affinity to its own promoter and to the Parp2 sporulation-specific promoter. Also binds directly to the RNA polymerase sigma factor WhiG, leading to inhibition of WhiG-dependent transcription in a dose-dependent manner. This Streptomyces coelicolor (strain ATCC BAA-471 / A3(2) / M145) protein is Probable cell division protein WhiA.